The chain runs to 452 residues: tRNA modification GTPase MnmE (452 aa).

(6S)-5-formyl-5,6,7,8-tetrahydrofolate contacts are provided by R21, E78, and K118. Residues 214–375 (GMKVVIAGRP…LREHLKKSMG (162 aa)) enclose the TrmE-type G domain. N224 is a K(+) binding site. Residues 224-229 (NAGKSS), 243-249 (TNIAGTT), and 268-271 (DTAG) each bind GTP. A Mg(2+)-binding site is contributed by S228. Residues T243, I245, and T248 each coordinate K(+). T249 serves as a coordination point for Mg(2+). K452 contacts (6S)-5-formyl-5,6,7,8-tetrahydrofolate.

It belongs to the TRAFAC class TrmE-Era-EngA-EngB-Septin-like GTPase superfamily. TrmE GTPase family. In terms of assembly, homodimer. Heterotetramer of two MnmE and two MnmG subunits. The cofactor is K(+).

The protein resides in the cytoplasm. Its function is as follows. Exhibits a very high intrinsic GTPase hydrolysis rate. Involved in the addition of a carboxymethylaminomethyl (cmnm) group at the wobble position (U34) of certain tRNAs, forming tRNA-cmnm(5)s(2)U34. This chain is tRNA modification GTPase MnmE, found in Actinobacillus pleuropneumoniae serotype 5b (strain L20).